Here is a 303-residue protein sequence, read N- to C-terminus: Probable 5-dehydro-4-deoxyglucarate dehydratase (303 aa).

The protein belongs to the DapA family.

It catalyses the reaction 5-dehydro-4-deoxy-D-glucarate + H(+) = 2,5-dioxopentanoate + CO2 + H2O. Its pathway is carbohydrate acid metabolism; D-glucarate degradation; 2,5-dioxopentanoate from D-glucarate: step 2/2. The polypeptide is Probable 5-dehydro-4-deoxyglucarate dehydratase (Pseudomonas savastanoi pv. phaseolicola (strain 1448A / Race 6) (Pseudomonas syringae pv. phaseolicola (strain 1448A / Race 6))).